The primary structure comprises 508 residues: Fc receptor-like protein 2 (508 aa).

A signal peptide spans 1–19 (MLLWSLLVIFDAVTEQADS). 4 Ig-like C2-type domains span residues 20–98 (LTLV…SNIV), 109–187 (PVLT…HRIR), 201–290 (PISN…KVVN), and 300–387 (PVLT…VSIS). Residues 20–401 (LTLVAPSSVF…YRRDLMTAGV (382 aa)) are Extracellular-facing. C128 and C177 are disulfide-bonded. N-linked (GlcNAc...) asparagine glycans are attached at residues N204, N234, N343, N355, and N365. 2 disulfide bridges follow: C226/C275 and C321/C368. A helical transmembrane segment spans residues 402 to 422 (LWGLFGVLGFTGVALLLYALF). The Cytoplasmic portion of the chain corresponds to 423–508 (HKISGESSAT…QVIYSSVKKS (86 aa)). Residues 429 to 453 (SSATNEPRGASRPNPQEFTYSSPTP) are disordered. Residues 441–452 (PNPQEFTYSSPT) show a composition bias toward polar residues. 4 consecutive short sequence motifs (ITIM motif) follow at residues 446–451 (FTYSSP), 460–465 (PVYVNV), 472–477 (VVYSQV), and 500–505 (VIYSSV).

In terms of assembly, the tyrosine-phosphorylated isoform 2 interacts with PTPN6. Isoform 2 is N- and O-glycosylated, and phosphorylated. As to expression, expressed in the secondary lymphoid organs, spleen and lymph node. Expression is limited to the mature B-cell lines. Highly expressed in CD19 and within the mantle zones of the tonsil tissue. Isoform 2 is expressed in the spleen, peripheral blood and bone marrow. Isoform 2 and isoform 4 are expressed in B-cell lines. Preferentially expressed in memory B-cells (at protein level).

It is found in the cell membrane. Functionally, may have an regulatory role in normal and neoplastic B cell development. The protein is Fc receptor-like protein 2 (FCRL2) of Homo sapiens (Human).